Reading from the N-terminus, the 301-residue chain is 4-hydroxy-tetrahydrodipicolinate synthase (301 aa).

Residue threonine 50 coordinates pyruvate. The active-site Proton donor/acceptor is the tyrosine 138. Lysine 167 (schiff-base intermediate with substrate) is an active-site residue. Isoleucine 209 contributes to the pyruvate binding site.

Belongs to the DapA family. Homotetramer; dimer of dimers.

The protein localises to the cytoplasm. It catalyses the reaction L-aspartate 4-semialdehyde + pyruvate = (2S,4S)-4-hydroxy-2,3,4,5-tetrahydrodipicolinate + H2O + H(+). It participates in amino-acid biosynthesis; L-lysine biosynthesis via DAP pathway; (S)-tetrahydrodipicolinate from L-aspartate: step 3/4. Functionally, catalyzes the condensation of (S)-aspartate-beta-semialdehyde [(S)-ASA] and pyruvate to 4-hydroxy-tetrahydrodipicolinate (HTPA). This Sorangium cellulosum (strain So ce56) (Polyangium cellulosum (strain So ce56)) protein is 4-hydroxy-tetrahydrodipicolinate synthase.